A 406-amino-acid chain; its full sequence is Argininosuccinate synthase (406 aa).

Residues 10–18 and Ala-37 contribute to the ATP site; that span reads AYSGGLDTS. Tyr-88 and Ser-93 together coordinate L-citrulline. Gly-118 contacts ATP. Residues Thr-120, Asn-124, and Asp-125 each contribute to the L-aspartate site. Asn-124 contributes to the L-citrulline binding site. 5 residues coordinate L-citrulline: Arg-128, Ser-179, Ser-188, Glu-264, and Tyr-276.

It belongs to the argininosuccinate synthase family. Type 1 subfamily. Homotetramer.

The protein localises to the cytoplasm. It catalyses the reaction L-citrulline + L-aspartate + ATP = 2-(N(omega)-L-arginino)succinate + AMP + diphosphate + H(+). It participates in amino-acid biosynthesis; L-arginine biosynthesis; L-arginine from L-ornithine and carbamoyl phosphate: step 2/3. In Roseobacter denitrificans (strain ATCC 33942 / OCh 114) (Erythrobacter sp. (strain OCh 114)), this protein is Argininosuccinate synthase.